A 335-amino-acid chain; its full sequence is Ketol-acid reductoisomerase (NAD(P)(+)) (335 aa).

The region spanning 2-182 (AKIYKDEDIS…GCARAGVIES (181 aa)) is the KARI N-terminal Rossmann domain. NADP(+)-binding positions include 25-28 (YGSQ), Arg-49, Ser-53, and 83-86 (DMVQ). Residue His-108 is part of the active site. Gly-134 is a binding site for NADP(+). The KARI C-terminal knotted domain occupies 183-328 (TFKEETETDL…RKLREMMFRG (146 aa)). Residues Asp-191, Glu-195, Glu-227, and Glu-231 each coordinate Mg(2+). Ser-252 is a substrate binding site.

It belongs to the ketol-acid reductoisomerase family. Homodimer. Requires Mg(2+) as cofactor.

The catalysed reaction is (2R)-2,3-dihydroxy-3-methylbutanoate + NAD(+) = (2S)-2-acetolactate + NADH + H(+). It carries out the reaction (2R)-2,3-dihydroxy-3-methylbutanoate + NADP(+) = (2S)-2-acetolactate + NADPH + H(+). The protein operates within amino-acid biosynthesis; L-isoleucine biosynthesis; L-isoleucine from 2-oxobutanoate: step 2/4. It participates in amino-acid biosynthesis; L-valine biosynthesis; L-valine from pyruvate: step 2/4. Involved in the biosynthesis of branched-chain amino acids (BCAA). Catalyzes an alkyl-migration followed by a ketol-acid reduction of (S)-2-acetolactate (S2AL) to yield (R)-2,3-dihydroxy-isovalerate. In the isomerase reaction, S2AL is rearranged via a Mg-dependent methyl migration to produce 3-hydroxy-3-methyl-2-ketobutyrate (HMKB). In the reductase reaction, this 2-ketoacid undergoes a metal-dependent reduction by NADPH or NADH to yield (R)-2,3-dihydroxy-isovalerate. The polypeptide is Ketol-acid reductoisomerase (NAD(P)(+)) (Ignisphaera aggregans (strain DSM 17230 / JCM 13409 / AQ1.S1)).